Reading from the N-terminus, the 183-residue chain is Adenine phosphoribosyltransferase (183 aa).

This sequence belongs to the purine/pyrimidine phosphoribosyltransferase family. In terms of assembly, homodimer.

Its subcellular location is the cytoplasm. It catalyses the reaction AMP + diphosphate = 5-phospho-alpha-D-ribose 1-diphosphate + adenine. It participates in purine metabolism; AMP biosynthesis via salvage pathway; AMP from adenine: step 1/1. Catalyzes a salvage reaction resulting in the formation of AMP, that is energically less costly than de novo synthesis. This chain is Adenine phosphoribosyltransferase, found in Salmonella paratyphi C (strain RKS4594).